The sequence spans 51 residues: Small polypeptide DEVIL 1 (51 aa).

A disordered region spans residues 1-25 (MEMKRVMMSSAERSKEKKRSISRRL). The span at 16-25 (EKKRSISRRL) shows a compositional bias: basic residues. The tract at residues 20 to 51 (SISRRLGKYMKEQKGRIYIIRRCMVMLLCSHD) is required for DVL/RTFL small polypeptide activity. Residues 28 to 44 (YMKEQKGRIYIIRRCMV) form a helical membrane-spanning segment.

This sequence belongs to the DVL/RTFL small polypeptides family. Mostly expressed in leaves and, to a lower extent, in roots and stems.

It localises to the cell membrane. Functionally, small polypeptide acting as a regulatory molecule which coordinates cellular responses required for differentiation, growth and development, including leaves shape, pedicule elongation, inflorescence organization and fruit maturation, probably by restricting polar cell proliferation in lateral organs and coordinating socket cell recruitment and differentiation at trichome sites. The chain is Small polypeptide DEVIL 1 from Arabidopsis thaliana (Mouse-ear cress).